We begin with the raw amino-acid sequence, 345 residues long: Uroporphyrinogen decarboxylase (345 aa).

Residues 30–34 (RQAGR), D79, Y154, S209, and H322 each bind substrate.

The protein belongs to the uroporphyrinogen decarboxylase family. In terms of assembly, homodimer.

The protein resides in the cytoplasm. The catalysed reaction is uroporphyrinogen III + 4 H(+) = coproporphyrinogen III + 4 CO2. It functions in the pathway porphyrin-containing compound metabolism; protoporphyrin-IX biosynthesis; coproporphyrinogen-III from 5-aminolevulinate: step 4/4. Catalyzes the decarboxylation of four acetate groups of uroporphyrinogen-III to yield coproporphyrinogen-III. The polypeptide is Uroporphyrinogen decarboxylase (Nocardioides sp. (strain ATCC BAA-499 / JS614)).